The following is a 527-amino-acid chain: Bifunctional purine biosynthesis protein PurH (527 aa).

The 149-residue stretch at 1–149 (MASDFLPVRR…KNFARVAVAT (149 aa)) folds into the MGS-like domain.

This sequence belongs to the PurH family.

The enzyme catalyses (6R)-10-formyltetrahydrofolate + 5-amino-1-(5-phospho-beta-D-ribosyl)imidazole-4-carboxamide = 5-formamido-1-(5-phospho-D-ribosyl)imidazole-4-carboxamide + (6S)-5,6,7,8-tetrahydrofolate. The catalysed reaction is IMP + H2O = 5-formamido-1-(5-phospho-D-ribosyl)imidazole-4-carboxamide. It participates in purine metabolism; IMP biosynthesis via de novo pathway; 5-formamido-1-(5-phospho-D-ribosyl)imidazole-4-carboxamide from 5-amino-1-(5-phospho-D-ribosyl)imidazole-4-carboxamide (10-formyl THF route): step 1/1. It functions in the pathway purine metabolism; IMP biosynthesis via de novo pathway; IMP from 5-formamido-1-(5-phospho-D-ribosyl)imidazole-4-carboxamide: step 1/1. This Xanthomonas campestris pv. campestris (strain 8004) protein is Bifunctional purine biosynthesis protein PurH.